The chain runs to 713 residues: Pro-neuregulin-3, membrane-bound isoform (713 aa).

The Extracellular segment spans residues 1–362 (MSEGAAGASP…MESEDVYQRQ (362 aa)). Disordered regions lie at residues 28 to 48 (AAAA…AAEP), 119 to 220 (SSFP…STQA), and 251 to 282 (AAAS…TTYS). Gly residues predominate over residues 34-44 (AGGGPDGGGEG). The segment covering 127–148 (TTTTTTSTTSPATPSAGGAASS) has biased composition (low complexity). Over residues 149-163 (RTPNRISTRLTTITR) the composition is skewed to polar residues. Low complexity-rich tracts occupy residues 195–207 (STTA…STPG) and 254–274 (SSSS…STSP). Residues 288 to 331 (HFKPCRDKDLAYCLNDGECFVIETLTGSHKHCRCKEGYQGVRCD) enclose the EGF-like domain. Disulfide bonds link C292–C306, C300–C319, and C321–C330. Residues 363–383 (VLSISCIIFGIVIVGMFCAAF) traverse the membrane as a helical segment. Over 384–713 (YFKSKKQAKQ…EIQRDSVLTK (330 aa)) the chain is Cytoplasmic. The tract at residues 449–496 (SAPQSFPEVTSPDRGSQPIKHHSPGQRSGMLHRNTFRRAPPSPRSRLG) is disordered.

It belongs to the neuregulin family. In terms of assembly, interacts with ERBB4. Post-translationally, proteolytic cleavage close to the plasma membrane on the external face leads to the release of the soluble growth factor form. Extensive glycosylation precedes the proteolytic cleavage. In terms of tissue distribution, expressed in sympathetic, motor, and sensory neurons.

The protein localises to the cell membrane. It is found in the secreted. In terms of biological role, direct ligand for the ERBB4 tyrosine kinase receptor. Binding results in ligand-stimulated tyrosine phosphorylation and activation of the receptor. Does not bind to the EGF receptor, ERBB2 or ERBB3 receptors. The sequence is that of Pro-neuregulin-3, membrane-bound isoform (Nrg3) from Mus musculus (Mouse).